Here is a 384-residue protein sequence, read N- to C-terminus: Odorant receptor 33c (384 aa).

Over 1–35 the chain is Cytoplasmic; it reads MVIIDSLSFYRPFWICMRLLVPTFFKDSSRPVQLY. A helical transmembrane segment spans residues 36–56; the sequence is VVLLHILVTLWFPLHLLLHLL. The Extracellular segment spans residues 57 to 63; the sequence is LLPSTAE. A helical transmembrane segment spans residues 64–84; sequence FFKNLTMSLTCVACSLKHVAH. Over 85–128 the chain is Cytoplasmic; that stretch reads LYHLPQIVEIESLIEQLDTFIASEQEHRYYRDHVHCHARRFTRC. Residues 129–149 form a helical membrane-spanning segment; it reads LYISFGMIYALFLFGVFVQVI. Topologically, residues 150 to 169 are extracellular; sequence SGNWELLYPAYFPFDLESNR. A helical membrane pass occupies residues 170–190; it reads FLGAVALGYQVFSMLVEGFQG. Topologically, residues 191–251 are cytoplasmic; sequence LGNDTYTPLT…LVRFHNLVSR (61 aa). A helical transmembrane segment spans residues 252-272; sequence TISEVQLVQLGGCGATLCIIV. At 273–274 the chain is on the extracellular side; it reads SY. Residues 275–295 form a helical membrane-spanning segment; sequence MLFFVGDTISLVYYLVFFGVV. Residues 296-358 are Cytoplasmic-facing; that stretch reads CVQLFPSCYF…WIIKAGGLIE (63 aa). A helical membrane pass occupies residues 359-379; it reads LNLNAFFATLKMAYSLFAVVV. Residues 380-384 lie on the Extracellular side of the membrane; the sequence is RAKGI.

It belongs to the insect chemoreceptor superfamily. Heteromeric odorant receptor channel (TC 1.A.69) family. Or2a subfamily. In terms of assembly, interacts with Orco. Complexes exist early in the endomembrane system in olfactory sensory neurons (OSNs), coupling these complexes to the conserved ciliary trafficking pathway. As to expression, expressed in the antenna and in a subset of 18 olfactory receptor neurons in the maxillary palp.

The protein localises to the cell membrane. Functionally, odorant receptor which mediates acceptance or avoidance behavior, depending on its substrates. The odorant receptor repertoire encodes a large collection of odor stimuli that vary widely in identity, intensity, and duration. May form a complex with Orco to form odorant-sensing units, providing sensitive and prolonged odorant signaling and calcium permeability. In Drosophila melanogaster (Fruit fly), this protein is Odorant receptor 33c (Or33c).